The primary structure comprises 1120 residues: Isoleucine--tRNA ligase (1120 aa).

The 'HIGH' region motif lies at 64-74 (PFANGLPHYGH). Positions 647-651 (KLSKR) match the 'KMSKS' region motif. Position 650 (Lys-650) interacts with ATP.

Belongs to the class-I aminoacyl-tRNA synthetase family. IleS type 2 subfamily. As to quaternary structure, monomer. Zn(2+) is required as a cofactor.

Its subcellular location is the cytoplasm. It carries out the reaction tRNA(Ile) + L-isoleucine + ATP = L-isoleucyl-tRNA(Ile) + AMP + diphosphate. In terms of biological role, catalyzes the attachment of isoleucine to tRNA(Ile). As IleRS can inadvertently accommodate and process structurally similar amino acids such as valine, to avoid such errors it has two additional distinct tRNA(Ile)-dependent editing activities. One activity is designated as 'pretransfer' editing and involves the hydrolysis of activated Val-AMP. The other activity is designated 'posttransfer' editing and involves deacylation of mischarged Val-tRNA(Ile). The sequence is that of Isoleucine--tRNA ligase from Ehrlichia canis (strain Jake).